Here is a 338-residue protein sequence, read N- to C-terminus: Anthranilate phosphoribosyltransferase (338 aa).

Residues Gly-81, 84–85 (GD), Thr-89, 91–94 (NIST), 109–117 (KHGNRNLSS), and Ala-121 each bind 5-phospho-alpha-D-ribose 1-diphosphate. Gly-81 contributes to the anthranilate binding site. Position 93 (Ser-93) interacts with Mg(2+). Asn-112 contacts anthranilate. Residue Arg-167 coordinates anthranilate. 2 residues coordinate Mg(2+): Asp-226 and Glu-227.

Belongs to the anthranilate phosphoribosyltransferase family. Homodimer. Requires Mg(2+) as cofactor.

The catalysed reaction is N-(5-phospho-beta-D-ribosyl)anthranilate + diphosphate = 5-phospho-alpha-D-ribose 1-diphosphate + anthranilate. It functions in the pathway amino-acid biosynthesis; L-tryptophan biosynthesis; L-tryptophan from chorismate: step 2/5. Its function is as follows. Catalyzes the transfer of the phosphoribosyl group of 5-phosphorylribose-1-pyrophosphate (PRPP) to anthranilate to yield N-(5'-phosphoribosyl)-anthranilate (PRA). This is Anthranilate phosphoribosyltransferase from Cereibacter sphaeroides (strain ATCC 17025 / ATH 2.4.3) (Rhodobacter sphaeroides).